The sequence spans 218 residues: Thiopurine S-methyltransferase (218 aa).

S-adenosyl-L-methionine contacts are provided by Trp10, Leu45, Glu66, and Arg123.

This sequence belongs to the class I-like SAM-binding methyltransferase superfamily. TPMT family.

It localises to the cytoplasm. It catalyses the reaction S-adenosyl-L-methionine + a thiopurine = S-adenosyl-L-homocysteine + a thiopurine S-methylether.. The polypeptide is Thiopurine S-methyltransferase (Shewanella sp. (strain MR-7)).